We begin with the raw amino-acid sequence, 591 residues long: Paxillin (591 aa).

An N-acetylmethionine modification is found at Met1. The LD motif 1 signature appears at Asp3 to Thr15. The tract at residues His17 to Leu138 is disordered. Tyr31 is subject to Phosphotyrosine; by PTK6. A compositionally biased stretch (pro residues) spans Val45–Ser54. Residues Trp69–Gln101 show a composition bias toward polar residues. Ser83 and Ser85 each carry phosphoserine. The residue at position 88 (Tyr88) is a Phosphotyrosine. Phosphoserine is present on Ser106. The residue at position 118 (Tyr118) is a Phosphotyrosine; by PTK6. A phosphoserine mark is found at Ser119, Ser126, and Ser130. The span at Pro121–Ser137 shows a compositional bias: polar residues. The residue at position 132 (Thr132) is a Phosphothreonine. Residues Ser137, Ser140, and Ser143 each carry the phosphoserine modification. The short motif at Glu144–Gln156 is the LD motif 2 element. The interval Gln156–Val213 is disordered. At Tyr181 the chain carries Phosphotyrosine. The LD motif 3 signature appears at Ser216–Val228. Residue Ser230 is modified to Phosphoserine. The disordered stretch occupies residues Val237–Ser260. Ser244 bears the Phosphoserine; by CDK5 mark. A phosphoserine mark is found at Ser250, Ser258, Ser261, and Ser272. The short motif at Glu265–Phe276 is the LD motif 4 element. Positions Arg289–Gly300 are enriched in basic and acidic residues. The disordered stretch occupies residues Arg289–Asp335. 4 positions are modified to phosphoserine: Ser303, Ser322, Ser332, and Ser340. Residues Gln333–Leu345 carry the LD motif 5 motif. 4 consecutive LIM zinc-binding domains span residues Gly356–Pro415, Arg416–Ala473, Pro474–Ser533, and Leu534–Cys591. Ser533 carries the post-translational modification Phosphoserine.

The protein belongs to the paxillin family. Binds to vinculin and to the SH3 domain of SRC. Interacts with GIT1, NUDT16L1/SDOS, PARVA, PARVB, SORBS1 and TGFB1I1. Component of cytoplasmic complexes, which also contain GIT1, ARHGEF6 and PAK1. Binds ASAP2. Interacts with RNF5 and PDCD10. Interacts with NEK3 and this interaction is prolactin-dependent. Interacts with PTK2/FAK1 and PTK2B/PYK2. Interacts with PTK6. Interacts with CD36. Interacts (via cytoplasmic domain) with CEACAM1; the interaction is phosphotyrosyl-dependent. Interacts with PXN; this complex stabilizes actin dynamics. Interacts with TRIM15. Interacts with PAK4; PAK4 acts as a scaffold to suppport PAXI phosphorylation at Ser-272. In terms of processing, phosphorylated by MAPK1/ERK2. Phosphorylated on tyrosine residues during integrin-mediated cell adhesion, embryonic development, fibroblast transformation and following stimulation of cells by mitogens. Phosphorylation at Ser-244 by CDK5 reduces its interaction with PTK2/FAK1 in matrix-cell focal adhesions (MCFA) during oligodendrocytes (OLs) differentiation. Phosphorylation at Tyr-31 and Tyr-118 by PTK6 promote the activation of RAC1 via CRK/CrKII, thereby promoting migration and invasion. Phosphorylation at Ser-250 by SLK is required for PXN redistribution and cell motility. Phosphorylation at Ser-272 promotes focal adhesion disassembly during cell migration.

Its subcellular location is the cytoplasm. It localises to the cytoskeleton. It is found in the cell junction. The protein resides in the focal adhesion. The protein localises to the cell cortex. Functionally, cytoskeletal protein involved in actin-membrane attachment at sites of cell adhesion to the extracellular matrix (focal adhesion). Recruits other proteins such as TRIM15 to focal adhesion. In Pongo abelii (Sumatran orangutan), this protein is Paxillin (PXN).